Reading from the N-terminus, the 564-residue chain is Pyruvate decarboxylase (564 aa).

Positions 28 and 115 each coordinate pyruvate. Thiamine diphosphate contacts are provided by residues threonine 390 and 413–415 (GSI). Aspartate 444 contributes to the Mg(2+) binding site. Thiamine diphosphate-binding positions include 445–446 (GS) and 471–476 (NDGYTI). Mg(2+) contacts are provided by asparagine 471 and glycine 473. Pyruvate is bound at residue glutamate 477.

The protein belongs to the TPP enzyme family. Homotetramer. Mg(2+) is required as a cofactor. It depends on thiamine diphosphate as a cofactor.

It catalyses the reaction a 2-oxocarboxylate + H(+) = an aldehyde + CO2. The catalysed reaction is pyruvate + H(+) = acetaldehyde + CO2. The protein is Pyruvate decarboxylase (PDC1) of Candida glabrata (strain ATCC 2001 / BCRC 20586 / JCM 3761 / NBRC 0622 / NRRL Y-65 / CBS 138) (Yeast).